We begin with the raw amino-acid sequence, 219 residues long: Thymidylate kinase (219 aa).

Position 10–17 (10–17 (GLEGAGKT)) interacts with ATP.

The protein belongs to the thymidylate kinase family.

It carries out the reaction dTMP + ATP = dTDP + ADP. Its function is as follows. Phosphorylation of dTMP to form dTDP in both de novo and salvage pathways of dTTP synthesis. The sequence is that of Thymidylate kinase from Pectobacterium carotovorum subsp. carotovorum (strain PC1).